A 389-amino-acid chain; its full sequence is Formate-dependent phosphoribosylglycinamide formyltransferase (389 aa).

Residues 12–13 (EL) and E72 each bind N(1)-(5-phospho-beta-D-ribosyl)glycinamide. Residues R104, K145, 150–155 (SSGKGQ), 185–188 (EEFI), and E193 each bind ATP. Residues 109-301 (DLAAKELGLK…EFELHLRAVL (193 aa)) enclose the ATP-grasp domain. Mg(2+) is bound by residues E258 and E271. N(1)-(5-phospho-beta-D-ribosyl)glycinamide-binding positions include D278, K350, and 357–358 (RR).

This sequence belongs to the PurK/PurT family. In terms of assembly, homodimer.

The enzyme catalyses N(1)-(5-phospho-beta-D-ribosyl)glycinamide + formate + ATP = N(2)-formyl-N(1)-(5-phospho-beta-D-ribosyl)glycinamide + ADP + phosphate + H(+). The protein operates within purine metabolism; IMP biosynthesis via de novo pathway; N(2)-formyl-N(1)-(5-phospho-D-ribosyl)glycinamide from N(1)-(5-phospho-D-ribosyl)glycinamide (formate route): step 1/1. Involved in the de novo purine biosynthesis. Catalyzes the transfer of formate to 5-phospho-ribosyl-glycinamide (GAR), producing 5-phospho-ribosyl-N-formylglycinamide (FGAR). Formate is provided by PurU via hydrolysis of 10-formyl-tetrahydrofolate. The protein is Formate-dependent phosphoribosylglycinamide formyltransferase of Phocaeicola vulgatus (strain ATCC 8482 / DSM 1447 / JCM 5826 / CCUG 4940 / NBRC 14291 / NCTC 11154) (Bacteroides vulgatus).